The chain runs to 1345 residues: DNA-directed RNA polymerase subunit beta' (1345 aa).

The Zn(2+) site is built by Cys60, Cys62, Cys75, and Cys78. 3 residues coordinate Mg(2+): Asp536, Asp538, and Asp540. Zn(2+) is bound by residues Cys895, Cys974, Cys981, and Cys984. The segment at 1325 to 1345 (DDNDNPVDFGDEFRIDPDELK) is disordered. Positions 1335 to 1345 (DEFRIDPDELK) are enriched in basic and acidic residues.

The protein belongs to the RNA polymerase beta' chain family. In terms of assembly, the RNAP catalytic core consists of 2 alpha, 1 beta, 1 beta' and 1 omega subunit. When a sigma factor is associated with the core the holoenzyme is formed, which can initiate transcription. Mg(2+) serves as cofactor. It depends on Zn(2+) as a cofactor.

The catalysed reaction is RNA(n) + a ribonucleoside 5'-triphosphate = RNA(n+1) + diphosphate. DNA-dependent RNA polymerase catalyzes the transcription of DNA into RNA using the four ribonucleoside triphosphates as substrates. The sequence is that of DNA-directed RNA polymerase subunit beta' from Bifidobacterium animalis subsp. lactis (strain AD011).